The sequence spans 142 residues: Large-conductance mechanosensitive channel (142 aa).

Transmembrane regions (helical) follow at residues 14-34 (VMDLAVGVIIGAAFTKIVTSV), 38-58 (LVMPIVGAITGGGFDFSNYFL), and 82-102 (GSFITVLINFMILAWIIFLLV).

The protein belongs to the MscL family. In terms of assembly, homopentamer.

It localises to the cell inner membrane. Functionally, channel that opens in response to stretch forces in the membrane lipid bilayer. May participate in the regulation of osmotic pressure changes within the cell. This Sinorhizobium fredii (strain NBRC 101917 / NGR234) protein is Large-conductance mechanosensitive channel.